A 204-amino-acid chain; its full sequence is Large ribosomal subunit protein bL25 (204 aa).

This sequence belongs to the bacterial ribosomal protein bL25 family. CTC subfamily. In terms of assembly, part of the 50S ribosomal subunit; part of the 5S rRNA/L5/L18/L25 subcomplex. Contacts the 5S rRNA. Binds to the 5S rRNA independently of L5 and L18.

This is one of the proteins that binds to the 5S RNA in the ribosome where it forms part of the central protuberance. The protein is Large ribosomal subunit protein bL25 of Bordetella bronchiseptica (strain ATCC BAA-588 / NCTC 13252 / RB50) (Alcaligenes bronchisepticus).